We begin with the raw amino-acid sequence, 92 residues long: Small ribosomal subunit protein uS19 (92 aa).

The protein belongs to the universal ribosomal protein uS19 family.

Its function is as follows. Protein S19 forms a complex with S13 that binds strongly to the 16S ribosomal RNA. In Shigella boydii serotype 18 (strain CDC 3083-94 / BS512), this protein is Small ribosomal subunit protein uS19.